The sequence spans 302 residues: 1D-myo-inositol 2-acetamido-2-deoxy-alpha-D-glucopyranoside deacetylase (302 aa).

Zn(2+) contacts are provided by His-12, Asp-15, and His-147.

This sequence belongs to the MshB deacetylase family. It depends on Zn(2+) as a cofactor.

The enzyme catalyses 1D-myo-inositol 2-acetamido-2-deoxy-alpha-D-glucopyranoside + H2O = 1D-myo-inositol 2-amino-2-deoxy-alpha-D-glucopyranoside + acetate. Catalyzes the deacetylation of 1D-myo-inositol 2-acetamido-2-deoxy-alpha-D-glucopyranoside (GlcNAc-Ins) in the mycothiol biosynthesis pathway. This is 1D-myo-inositol 2-acetamido-2-deoxy-alpha-D-glucopyranoside deacetylase from Thermobispora bispora (strain ATCC 19993 / DSM 43833 / CBS 139.67 / JCM 10125 / KCTC 9307 / NBRC 14880 / R51).